The following is a 409-amino-acid chain: Snake venom metalloproteinase BITM02A (409 aa).

A signal peptide spans 1–20; the sequence is MIEVLLVTICLAAFPYQGSS. A propeptide spanning residues 21-189 is cleaved from the precursor; sequence IILESGNVND…KKASQSNLTP (169 aa). The Peptidase M12B domain maps to 193–389; it reads RYIELFIVVD…ENPQCILNKR (197 aa). Ca(2+) contacts are provided by glutamate 196 and aspartate 280. 3 disulfide bridges follow: cysteine 304-cysteine 384, cysteine 344-cysteine 368, and cysteine 346-cysteine 351. Residue histidine 329 participates in Zn(2+) binding. Glutamate 330 is a catalytic residue. The Zn(2+) site is built by histidine 333 and histidine 339. Residues cysteine 384, asparagine 387, valine 399, asparagine 402, leucine 404, glutamate 406, and glutamate 409 each coordinate Ca(2+). The propeptide occupies 390–409; sequence LRTDTVSTPVSGNELLEAGE.

Belongs to the venom metalloproteinase (M12B) family. P-I subfamily. In terms of assembly, monomer. It depends on Zn(2+) as a cofactor. As to expression, expressed by the venom gland.

The protein localises to the secreted. Functionally, snake venom metalloproteinase that impairs hemostasis in the envenomed animal. This chain is Snake venom metalloproteinase BITM02A, found in Bothrops insularis (Golden lancehead).